The following is a 428-amino-acid chain: Peptidase B (428 aa).

Mn(2+) contacts are provided by Lys195 and Asp200. Lys207 is an active-site residue. Mn(2+) is bound by residues Asp218, Asp277, and Glu279. Arg281 is a catalytic residue.

It belongs to the peptidase M17 family. As to quaternary structure, homohexamer. Mn(2+) is required as a cofactor.

It localises to the cytoplasm. It catalyses the reaction Release of an N-terminal amino acid, Xaa, from a peptide or arylamide. Xaa is preferably Glu or Asp but may be other amino acids, including Leu, Met, His, Cys and Gln.. In terms of biological role, probably plays an important role in intracellular peptide degradation. This chain is Peptidase B, found in Cronobacter sakazakii (strain ATCC BAA-894) (Enterobacter sakazakii).